Here is a 169-residue protein sequence, read N- to C-terminus: Ribosome maturation factor RimM (169 aa).

The PRC barrel domain maps to 94 to 168 (DDEFYHADLI…RIVADPPEGL (75 aa)).

Belongs to the RimM family. Binds ribosomal protein uS19.

It localises to the cytoplasm. In terms of biological role, an accessory protein needed during the final step in the assembly of 30S ribosomal subunit, possibly for assembly of the head region. Essential for efficient processing of 16S rRNA. May be needed both before and after RbfA during the maturation of 16S rRNA. It has affinity for free ribosomal 30S subunits but not for 70S ribosomes. The chain is Ribosome maturation factor RimM from Cereibacter sphaeroides (strain ATCC 17029 / ATH 2.4.9) (Rhodobacter sphaeroides).